The following is a 384-amino-acid chain: tRNA-specific 2-thiouridylase MnmA (384 aa).

ATP is bound by residues 13 to 20 (GLSGGVDS) and methionine 39. Residues 99-101 (NPD) are interaction with target base in tRNA. Cysteine 104 functions as the Nucleophile in the catalytic mechanism. Cysteine 104 and cysteine 215 are oxidised to a cystine. Glycine 128 serves as a coordination point for ATP. The interaction with tRNA stretch occupies residues 165–167 (KDQ). Cysteine 215 acts as the Cysteine persulfide intermediate in catalysis. Positions 333 to 334 (RY) are interaction with tRNA.

This sequence belongs to the MnmA/TRMU family.

The protein resides in the cytoplasm. The enzyme catalyses S-sulfanyl-L-cysteinyl-[protein] + uridine(34) in tRNA + AH2 + ATP = 2-thiouridine(34) in tRNA + L-cysteinyl-[protein] + A + AMP + diphosphate + H(+). In terms of biological role, catalyzes the 2-thiolation of uridine at the wobble position (U34) of tRNA, leading to the formation of s(2)U34. This Albidiferax ferrireducens (strain ATCC BAA-621 / DSM 15236 / T118) (Rhodoferax ferrireducens) protein is tRNA-specific 2-thiouridylase MnmA.